The primary structure comprises 366 residues: Ribosomal RNA large subunit methyltransferase M (366 aa).

S-adenosyl-L-methionine is bound by residues Ser188, 221 to 224, Asp240, Asp260, and Asp277; that span reads CPGG. Lys306 serves as the catalytic Proton acceptor.

The protein belongs to the class I-like SAM-binding methyltransferase superfamily. RNA methyltransferase RlmE family. RlmM subfamily. Monomer.

The protein localises to the cytoplasm. The enzyme catalyses cytidine(2498) in 23S rRNA + S-adenosyl-L-methionine = 2'-O-methylcytidine(2498) in 23S rRNA + S-adenosyl-L-homocysteine + H(+). Its function is as follows. Catalyzes the 2'-O-methylation at nucleotide C2498 in 23S rRNA. The chain is Ribosomal RNA large subunit methyltransferase M from Escherichia fergusonii (strain ATCC 35469 / DSM 13698 / CCUG 18766 / IAM 14443 / JCM 21226 / LMG 7866 / NBRC 102419 / NCTC 12128 / CDC 0568-73).